Consider the following 568-residue polypeptide: Hexose transporter 1 (568 aa).

Over 1-32 (MATEEMREKSLKREAESLWDIPPESYASKACS) the chain is Cytoplasmic. Residues 33-53 (CMGTAAQLVMVAVLGSFQFGF) form a helical membrane-spanning segment. The Extracellular portion of the chain corresponds to 54 to 86 (NLSALNTSKAFIILDFGWCKDENGGHYSDCDTG). Cys72 and Cys83 are joined by a disulfide. Residues 87-107 (LVYGSLINTAVFLGACVGCLL) traverse the membrane as a helical segment. The Cytoplasmic segment spans residues 108 to 119 (GGRLTDFGRRAS). A helical transmembrane segment spans residues 120–140 (LIFTHCVCTLGCILSAAAEGF). Topologically, residues 141-142 (PT) are extracellular. A helical transmembrane segment spans residues 143-163 (LLIARLVVGVAVGMFTVCVPM). The Cytoplasmic portion of the chain corresponds to 164–182 (YLSEVTPDDRRGYFGTFHQ). Residue Gln182 participates in alpha-D-glucose binding. Gln182 provides a ligand contact to beta-D-glucose. Residues 183–203 (LFITLGIFFGTLLGLAFGNAP) form a helical membrane-spanning segment. At 204-220 (AGDEVYEVSTFQQAWWR) the chain is on the extracellular side. A helical transmembrane segment spans residues 221–241 (VMLGLPAVVSLLAIWLLWFVF). Topologically, residues 242-306 (PFETPQYMVE…KAIVHPTYRS (65 aa)) are cytoplasmic. A helical transmembrane segment spans residues 307–327 (VILLACLLSIMQQFTGINVLV). The alpha-D-glucose site is built by Gln318, Gln319, and Asn324. Position 318 (Gln318) interacts with beta-D-glucose. Position 324 (Asn324) interacts with beta-D-glucose. The Extracellular portion of the chain corresponds to 328–345 (ANSNNLYSSLKLPQDAVT). Residues 346-366 (GLTVGFTALNVFLTVITIPLV) traverse the membrane as a helical segment. A beta-D-glucose-binding site is contributed by Asn355. Residues 367–374 (DRLGRRTL) lie on the Cytoplasmic side of the membrane. A helical membrane pass occupies residues 375–395 (LLFSEAVMFVAMGIAFVANLV). Topologically, residues 396 to 406 (DQSNTAVQWVT) are extracellular. Residues 407–427 (VACVYVFIVGFAVGYGPVLWI) traverse the membrane as a helical segment. Trp426 is an alpha-D-glucose binding site. Residues 428-443 (YIHEIFPPEIKQGAAS) lie on the Cytoplasmic side of the membrane. A helical membrane pass occupies residues 444-464 (LASALNWVATVAIVLPSDFLL). Residues 465–469 (KQGFS) are Extracellular-facing. A helical transmembrane segment spans residues 470–490 (VFVGICTVALAIIFVVTFIFV). At 491-568 (KETKGLSIEE…DDLTKGTEVV (78 aa)) the chain is on the cytoplasmic side.

This sequence belongs to the major facilitator superfamily. Sugar transporter (TC 2.A.1.1) family. Homodimer.

It localises to the cell membrane. The catalysed reaction is D-glucose(out) = D-glucose(in). It carries out the reaction D-fructose(out) = D-fructose(in). It catalyses the reaction D-galactose(in) = D-galactose(out). The enzyme catalyses D-mannose(out) = D-mannose(in). The catalysed reaction is D-glucosamine(out) = D-glucosamine(in). It carries out the reaction D-xylose(out) = D-xylose(in). Its activity is regulated as follows. Inhibited by cytochalasin B. Sodium-independent facilitative hexose transporter. Can transport D-glucose and D-mannose with high affinity, and D-fructose and D-galactose with low affinity. Can transport D-xylose and D-glucosamine. This Toxoplasma gondii protein is Hexose transporter 1.